Consider the following 473-residue polypeptide: Trigger factor (473 aa).

The 82-residue stretch at 162–243 (GDFVSIDLSA…VKSIKVRELP (82 aa)) folds into the PPIase FKBP-type domain. Residues 433–473 (TAEFFGPSGEQAEAEQDEAAPAEDATEETDADSDEAADDSK) are disordered. Residues 444-473 (AEAEQDEAAPAEDATEETDADSDEAADDSK) are compositionally biased toward acidic residues.

It belongs to the FKBP-type PPIase family. Tig subfamily.

It is found in the cytoplasm. The enzyme catalyses [protein]-peptidylproline (omega=180) = [protein]-peptidylproline (omega=0). In terms of biological role, involved in protein export. Acts as a chaperone by maintaining the newly synthesized protein in an open conformation. Functions as a peptidyl-prolyl cis-trans isomerase. This Mycolicibacterium vanbaalenii (strain DSM 7251 / JCM 13017 / BCRC 16820 / KCTC 9966 / NRRL B-24157 / PYR-1) (Mycobacterium vanbaalenii) protein is Trigger factor.